We begin with the raw amino-acid sequence, 325 residues long: UPF0285 protein MA_3856 (325 aa).

It belongs to the UPF0285 family.

In Methanosarcina acetivorans (strain ATCC 35395 / DSM 2834 / JCM 12185 / C2A), this protein is UPF0285 protein MA_3856.